Consider the following 308-residue polypeptide: Transcriptional adapter 1-2 (308 aa).

Belongs to the TADA1 family. In terms of assembly, component of the Spt-Ada-Gcn5 acetyltransferase (SAGA) complex consisting of wda/Taf5L, Saf6, Taf9, Taf10b, Taf12, Ada1, Spt3, Spt7, Spt20, Sf3b3, Sf3b5, Nipped-A/Tra1, a histone acetyltransferase (HAT) module made up of Gcn5, Ada2b (Isoform B), Ada3 and Sgf29, and a deubiquitinase (DUB) module made up of not/nonstop, Sgf11 and e(y)2 tethered to SAGA by Atxn7. Not a component of the Ada2a-containing ATAC complex.

The protein resides in the nucleus. Its function is as follows. Component of the transcription regulatory complex SAGA, a multiprotein complex that activates transcription by remodeling chromatin and mediating histone acetylation and deubiquitination. The SAGA complex predominantly acetylates histone H3. In Drosophila melanogaster (Fruit fly), this protein is Transcriptional adapter 1-2.